The following is a 179-amino-acid chain: Adenine phosphoribosyltransferase (179 aa).

Belongs to the purine/pyrimidine phosphoribosyltransferase family. In terms of assembly, homodimer.

It is found in the cytoplasm. It carries out the reaction AMP + diphosphate = 5-phospho-alpha-D-ribose 1-diphosphate + adenine. It functions in the pathway purine metabolism; AMP biosynthesis via salvage pathway; AMP from adenine: step 1/1. Its function is as follows. Catalyzes a salvage reaction resulting in the formation of AMP, that is energically less costly than de novo synthesis. The sequence is that of Adenine phosphoribosyltransferase from Helicobacter acinonychis (strain Sheeba).